Reading from the N-terminus, the 1705-residue chain is Alpha-protein kinase 3 (1705 aa).

Low complexity predominate over residues 1–10; that stretch reads MGSRRAPSRG. Positions 1 to 33 are disordered; sequence MGSRRAPSRGWGAGGRSGAGGDGEDDGPVWIPS. The segment covering 11–21 has biased composition (gly residues); that stretch reads WGAGGRSGAGG. The 92-residue stretch at 77–168 folds into the Ig-like 1 domain; that stretch reads PLFETTLKSR…GIVSCSGVLE (92 aa). Residues 211-221 show a composition bias toward basic and acidic residues; that stretch reads DTLRKLSPDRF. Disordered stretches follow at residues 211–244, 308–749, 792–845, 1082–1145, and 1173–1226; these read DTLRKLSPDRFQRKRRLSGAQAPGPSVPTREPEG, LKEE…GPRA, GPLS…ERPG, GLAS…KFPG, and RAAG…MLEV. Ser228 is subject to Phosphoserine. Residues 308–342 show a composition bias toward basic and acidic residues; sequence LKEESGAKKKKKDEESKQGLRKPELEKAAQSRRSS. Residues 370-382 are compositionally biased toward low complexity; that stretch reads PRGRAARGPGSSG. The span at 495-504 shows a compositional bias: polar residues; the sequence is DSKPISSLSQ. Residues 557-579 show a composition bias toward low complexity; the sequence is TTTAPTMSASSSSDVASIGVSTS. Positions 598-609 are enriched in polar residues; that stretch reads TSANQRTGSKKN. The segment covering 647–657 has biased composition (basic and acidic residues); the sequence is ESKRPQSDRSA. Positions 666 to 676 are enriched in polar residues; it reads RAETQLETTQA. Residues 679–700 are compositionally biased toward basic and acidic residues; it reads KIQEDRKAQADKGTQEDRRMQG. Polar residues predominate over residues 708 to 729; it reads KGTQSEGSAPTAMEGQSEQEVA. The segment covering 736 to 745 has biased composition (pro residues); the sequence is SRTPKLPPTA. The span at 829 to 844 shows a compositional bias: basic and acidic residues; sequence AKQEDSPFQCPKEERP. Positions 1120–1131 are enriched in low complexity; sequence GQAAPGQGPSAE. Ser1222 carries the phosphoserine modification. One can recognise an Ig-like 2 domain in the interval 1274–1362; the sequence is PQVIRKIRVE…GSASTDFCLS (89 aa). An intrachain disulfide couples Cys1296 to Cys1346. Residues 1390–1625 form the Alpha-type protein kinase domain; sequence KGLADSGCWG…YCELLGLTPL (236 aa). The segment at 1628–1705 is disordered; it reads PEAAHPQAKA…EEGSKAQGMR (78 aa). The segment covering 1664–1696 has biased composition (polar residues); it reads PQGTRKSAPSSKATPQASEPVTTQLLGQPPTQE.

It belongs to the protein kinase superfamily. Alpha-type protein kinase family. ALPK subfamily.

Its subcellular location is the nucleus. The enzyme catalyses L-seryl-[protein] + ATP = O-phospho-L-seryl-[protein] + ADP + H(+). It carries out the reaction L-threonyl-[protein] + ATP = O-phospho-L-threonyl-[protein] + ADP + H(+). Involved in cardiomyocyte differentiation. This is Alpha-protein kinase 3 from Homo sapiens (Human).